Consider the following 185-residue polypeptide: Prenylated Rab acceptor protein 1 (185 aa).

The Cytoplasmic portion of the chain corresponds to 1 to 78 (MAAQKDQQKD…RNVEYYQSNY (78 aa)). The tract at residues 30–54 (AGREWLERRRATIRPWGTFVDQQRF) is required for interaction with prenylated RAB3A and VAMP2. Helical transmembrane passes span 79 to 94 (VFVFLGLILYCVVTSP) and 95 to 112 (MLLVALAVFFGACYILYL). The Cytoplasmic segment spans residues 113 to 131 (RTLQSKLVLFGREVSPAHQ). A run of 2 helical transmembrane segments spans residues 132-148 (YALAGGVSFPFFWLAGA) and 149-165 (GSAVFWVLGATLVLIGS). The segment at 165–185 (SHAAFHQMEPADGEELQMEPV) is required for interaction with GDI1. The Cytoplasmic portion of the chain corresponds to 166–185 (HAAFHQMEPADGEELQMEPV). A required for interaction with prenylated RAB3A and VAMP2 region spans residues 175–185 (ADGEELQMEPV). The homodimerization stretch occupies residues 175–185 (ADGEELQMEPV).

This sequence belongs to the PRA1 family. In terms of assembly, homodimer. Interacts with VAMP2 (synaptobrevin-2), GDI1, NRDG1 and PCLO. Interacts with prenylated Rab proteins (including RAB5 and RAB6), and with the members of the Ras superfamily HRAS, RHOA, TC21, and RAP1A.

It is found in the cell membrane. The protein localises to the cytoplasm. The protein resides in the golgi apparatus. It localises to the cytoplasmic vesicle. Its subcellular location is the secretory vesicle. It is found in the synaptic vesicle. Functionally, general Rab protein regulator required for vesicle formation from the Golgi complex. May control vesicle docking and fusion by mediating the action of Rab GTPases to the SNARE complexes. In addition it inhibits the removal of Rab GTPases from the membrane by GDI1. The chain is Prenylated Rab acceptor protein 1 (Rabac1) from Mus musculus (Mouse).